A 390-amino-acid chain; its full sequence is NADH-dependent butanol dehydrogenase B (390 aa).

It belongs to the iron-containing alcohol dehydrogenase family. In terms of assembly, homodimer.

Its pathway is alcohol metabolism; butanol biosynthesis. The sequence is that of NADH-dependent butanol dehydrogenase B (bdhB) from Clostridium acetobutylicum (strain ATCC 824 / DSM 792 / JCM 1419 / IAM 19013 / LMG 5710 / NBRC 13948 / NRRL B-527 / VKM B-1787 / 2291 / W).